The sequence spans 45 residues: Putative UPF0377 protein YJL222W-B (45 aa).

The protein belongs to the UPF0377 family.

This is Putative UPF0377 protein YJL222W-B from Saccharomyces cerevisiae (strain ATCC 204508 / S288c) (Baker's yeast).